The following is a 556-amino-acid chain: Hydroxylamine reductase (556 aa).

4 residues coordinate [4Fe-4S] cluster: Cys4, Cys7, Cys19, and Cys26. Hybrid [4Fe-2O-2S] cluster contacts are provided by His252, Glu276, Cys320, Cys407, Cys435, Cys460, Glu494, and Lys496. Cys407 is subject to Cysteine persulfide.

Belongs to the HCP family. The cofactor is [4Fe-4S] cluster. It depends on hybrid [4Fe-2O-2S] cluster as a cofactor.

It is found in the cytoplasm. The catalysed reaction is A + NH4(+) + H2O = hydroxylamine + AH2 + H(+). Catalyzes the reduction of hydroxylamine to form NH(3) and H(2)O. This chain is Hydroxylamine reductase, found in Acidithiobacillus ferridurans.